The primary structure comprises 352 residues: GTPase Obg (352 aa).

The Obg domain maps to 1–159; sequence MSFIDEAKVF…FPIFMQLKVL (159 aa). Positions 160-327 constitute an OBG-type G domain; sequence SDIGIIGMPN…VMLYEMLQKD (168 aa). GTP is bound by residues 166–173, 191–195, 212–215, 279–282, and 308–310; these read GMPNAGKS, FTTLE, DIPG, NKCD, and SLD. 2 residues coordinate Mg(2+): Ser173 and Thr193.

This sequence belongs to the TRAFAC class OBG-HflX-like GTPase superfamily. OBG GTPase family. Monomer. The cofactor is Mg(2+).

It is found in the cytoplasm. An essential GTPase which binds GTP, GDP and possibly (p)ppGpp with moderate affinity, with high nucleotide exchange rates and a fairly low GTP hydrolysis rate. Plays a role in control of the cell cycle, stress response, ribosome biogenesis and in those bacteria that undergo differentiation, in morphogenesis control. The polypeptide is GTPase Obg (Anaplasma phagocytophilum (strain HZ)).